The chain runs to 223 residues: Killer cell lectin-like receptor subfamily B member 1B allele A (223 aa).

Topologically, residues Met1 to Cys45 are cytoplasmic. Positions Val5–Leu10 match the ITIM motif motif. An LCK-binding motif motif is present at residues Cys31–Pro34. Residues Ala46–Leu66 traverse the membrane as a helical; Signal-anchor for type II membrane protein segment. Topologically, residues Gln67–Ser223 are extracellular. Residues His101–Gln211 form the C-type lectin domain. Disulfide bonds link Cys122/Cys210 and Cys189/Cys202.

Homodimer; disulfide-linked. Interacts with tyrosine kinase LCK. Binds PTPN6/SHP-1 in a phosphorylation-dependent manner. Expressed in a subset of natural killer cells.

The protein resides in the membrane. Its function is as follows. Receptor for CLEC2D/OCIL. Ligand-binding contributes to inhibition of cytotoxic natural killer (NK) cells. May mediate MHC class I-independent 'missing-self' recognition of allografts, tumor cells and virus-infected cells. The chain is Killer cell lectin-like receptor subfamily B member 1B allele A from Rattus norvegicus (Rat).